Consider the following 848-residue polypeptide: Adenylate cyclase (848 aa).

Residues 1 to 535 form a catalytic region; that stretch reads MYLYIETLKQ…DVSHHFPLRL (535 aa). Residues 541–848 are regulatory; it reads KALYSPCEIR…DTPLLQQYFS (308 aa). His-609 carries the post-translational modification Phosphohistidine; by CRR.

Belongs to the adenylyl cyclase class-1 family.

It is found in the cytoplasm. It carries out the reaction ATP = 3',5'-cyclic AMP + diphosphate. In Escherichia coli O157:H7, this protein is Adenylate cyclase (cyaA).